Consider the following 118-residue polypeptide: Putative pterin-4-alpha-carbinolamine dehydratase (118 aa).

The protein belongs to the pterin-4-alpha-carbinolamine dehydratase family.

It catalyses the reaction (4aS,6R)-4a-hydroxy-L-erythro-5,6,7,8-tetrahydrobiopterin = (6R)-L-erythro-6,7-dihydrobiopterin + H2O. This chain is Putative pterin-4-alpha-carbinolamine dehydratase (phhB), found in Xanthomonas axonopodis pv. citri (strain 306).